A 327-amino-acid chain; its full sequence is Olfactory receptor 51T1 (327 aa).

The Extracellular segment spans residues 1–27 (MAIFNNTTSSSSNFLLTAFPGLECAHV). Residues Asn5 and Asn6 are each glycosylated (N-linked (GlcNAc...) asparagine). Residues 28-48 (WISIPVCCLYTIALLGNSMIF) traverse the membrane as a helical segment. Over 49 to 56 (LVIITKRR) the chain is Cytoplasmic. The chain crosses the membrane as a helical span at residues 57–77 (LHKPMYYFLSMLAAVDLCLTI). Over 78-101 (TTLPTVLGVLWFHAREISFKACFI) the chain is Extracellular. A helical membrane pass occupies residues 102 to 122 (QMFFVHAFSLLESSVLVAMAF). The Cytoplasmic segment spans residues 123 to 141 (DRFVAICNPLNYATILTDR). A helical transmembrane segment spans residues 142 to 162 (MVLVIGLVICIRPAVFLLPLL). Residues 163-198 (VAINTVSFHGGHELSHPFCYHPEVIKYTYSKPWISS) lie on the Extracellular side of the membrane. The helical transmembrane segment at 199–219 (FWGLFLQLYLNGTDVLFILFS) threads the bilayer. The Cytoplasmic portion of the chain corresponds to 220–239 (YVLILRTVLGIVARKKQQKA). A helical transmembrane segment spans residues 240-260 (LSTCVCHICAVTIFYVPLISL). At 261-275 (SLAHRLFHSTPRVLC) the chain is on the extracellular side. The helical transmembrane segment at 276–296 (STLANIYLLLPPVLNPIIYSL) threads the bilayer. Residues 297–327 (KTKTIRQAMFQLLQSKGSWGFNVRGLRGRWD) are Cytoplasmic-facing.

The protein belongs to the G-protein coupled receptor 1 family.

It localises to the cell membrane. Its function is as follows. Odorant receptor. This Homo sapiens (Human) protein is Olfactory receptor 51T1 (OR51T1).